We begin with the raw amino-acid sequence, 202 residues long: Holliday junction branch migration complex subunit RuvA (202 aa).

Residues 1-64 (MIDFLKGRLV…ETALEMFGFS (64 aa)) are domain I. The tract at residues 65 to 143 (SELDRTAFLL…KQQVAVSAEL (79 aa)) is domain II. A flexible linker region spans residues 144-152 (PASDGVPVL). A domain III region spans residues 152–202 (LAGRAENEALAALISLGYTPREAREALNRLPDRKLDAAGLVHAALRIMGSQ).

This sequence belongs to the RuvA family. As to quaternary structure, homotetramer. Forms an RuvA(8)-RuvB(12)-Holliday junction (HJ) complex. HJ DNA is sandwiched between 2 RuvA tetramers; dsDNA enters through RuvA and exits via RuvB. An RuvB hexamer assembles on each DNA strand where it exits the tetramer. Each RuvB hexamer is contacted by two RuvA subunits (via domain III) on 2 adjacent RuvB subunits; this complex drives branch migration. In the full resolvosome a probable DNA-RuvA(4)-RuvB(12)-RuvC(2) complex forms which resolves the HJ.

It is found in the cytoplasm. Its function is as follows. The RuvA-RuvB-RuvC complex processes Holliday junction (HJ) DNA during genetic recombination and DNA repair, while the RuvA-RuvB complex plays an important role in the rescue of blocked DNA replication forks via replication fork reversal (RFR). RuvA specifically binds to HJ cruciform DNA, conferring on it an open structure. The RuvB hexamer acts as an ATP-dependent pump, pulling dsDNA into and through the RuvAB complex. HJ branch migration allows RuvC to scan DNA until it finds its consensus sequence, where it cleaves and resolves the cruciform DNA. This is Holliday junction branch migration complex subunit RuvA from Desulforudis audaxviator (strain MP104C).